Consider the following 449-residue polypeptide: MPSSLWKHCLNHLEGELDPQEFNTYIRPLQAIQQGTSLQLYAPNQFVIDWVQNCAESRINALLSHYSSGRIEKALLEVGSCSLQPQPHIQAVELTSKSARSSSRVVDRIPESRLNKNYTFDSFVEGKSNQLPRAASHQVAENPGSAYNPLFIYGGVGLGKTHLMHAVGNYIRSRNPSARVVYLHSEQFVAEMIKALQLNAINEFKTRYRSVDILLIDDIQFFAGKERSQEEFFYTFNTLLEVQHQIILTCDRFPKEVNGLEERLTSRFGWGLTVAVEPPELETRVAILMNKASIENIILSDDVAFFLGRLIYSNIRELEGALRRVIAYSRFTHRPITMELTREALKDLLTLQEKLVTIENIQKTVAEYYKIRVSDLSSKRRSRVVARPRQTAMSLSKELTDHSLTEIGKFFGGRDHTTVLHACRKINELKSIDRRMAEDYHNLLKKLST.

The interval 1–71 (MPSSLWKHCL…LLSHYSSGRI (71 aa)) is domain I, interacts with DnaA modulators. The tract at residues 71–112 (IEKALLEVGSCSLQPQPHIQAVELTSKSARSSSRVVDRIPES) is domain II. The segment at 113–329 (RLNKNYTFDS…GALRRVIAYS (217 aa)) is domain III, AAA+ region. The ATP site is built by glycine 157, glycine 159, lysine 160, and threonine 161. Positions 330 to 449 (RFTHRPITME…YHNLLKKLST (120 aa)) are domain IV, binds dsDNA.

The protein belongs to the DnaA family. As to quaternary structure, oligomerizes as a right-handed, spiral filament on DNA at oriC.

The protein resides in the cytoplasm. Functionally, plays an essential role in the initiation and regulation of chromosomal replication. ATP-DnaA binds to the origin of replication (oriC) to initiate formation of the DNA replication initiation complex once per cell cycle. Binds the DnaA box (a 9 base pair repeat at the origin) and separates the double-stranded (ds)DNA. Forms a right-handed helical filament on oriC DNA; dsDNA binds to the exterior of the filament while single-stranded (ss)DNA is stabiized in the filament's interior. The ATP-DnaA-oriC complex binds and stabilizes one strand of the AT-rich DNA unwinding element (DUE), permitting loading of DNA polymerase. After initiation quickly degrades to an ADP-DnaA complex that is not apt for DNA replication. Binds acidic phospholipids. The polypeptide is Chromosomal replication initiator protein DnaA (Nitrosococcus oceani (strain ATCC 19707 / BCRC 17464 / JCM 30415 / NCIMB 11848 / C-107)).